The chain runs to 351 residues: Mannonate dehydratase (351 aa).

It belongs to the mannonate dehydratase family. Fe(2+) is required as a cofactor. Mn(2+) serves as cofactor.

The enzyme catalyses D-mannonate = 2-dehydro-3-deoxy-D-gluconate + H2O. The protein operates within carbohydrate metabolism; pentose and glucuronate interconversion. In terms of biological role, catalyzes the dehydration of D-mannonate. This Clostridium acetobutylicum (strain ATCC 824 / DSM 792 / JCM 1419 / IAM 19013 / LMG 5710 / NBRC 13948 / NRRL B-527 / VKM B-1787 / 2291 / W) protein is Mannonate dehydratase.